Reading from the N-terminus, the 415-residue chain is Granaticin polyketide putative beta-ketoacyl synthase 2 (415 aa).

In terms of domain architecture, Ketosynthase family 3 (KS3) spans 6-406 (RRRAVVTGLS…GFNSAVVVTL (401 aa)).

It belongs to the thiolase-like superfamily. Beta-ketoacyl-ACP synthases family.

Its pathway is antibiotic biosynthesis; granaticin biosynthesis. This Streptomyces violaceoruber protein is Granaticin polyketide putative beta-ketoacyl synthase 2 (gra-orf2).